A 239-amino-acid chain; its full sequence is Tetraspanin-9 (239 aa).

Topologically, residues 1-13 are cytoplasmic; that stretch reads MARGCLCCLKYMM. Residues 14-34 traverse the membrane as a helical segment; the sequence is FLFNLIFWLCGCGLLGVGIWL. Residues 35–55 are Extracellular-facing; the sequence is SVSQGNFATFSPSFPSLSAAN. A helical membrane pass occupies residues 56–76; the sequence is LVIVIGTVVMVTGFLGCLGAI. Over 77 to 85 the chain is Cytoplasmic; it reads KENKCLLLS. The helical transmembrane segment at 86–106 threads the bilayer; that stretch reads FFIILLIILLTELILLILFFV. Topologically, residues 107 to 203 are extracellular; that stretch reads YMDKVNENAK…VKMWFDDNKH (97 aa). N180 carries N-linked (GlcNAc...) asparagine glycosylation. Residues 204–224 form a helical membrane-spanning segment; that stretch reads VLGTIGMCILIIQILGMAFSM. Residues 225 to 239 lie on the Cytoplasmic side of the membrane; it reads TLFQQIHRTGKKYDA.

The protein belongs to the tetraspanin (TM4SF) family.

The protein localises to the membrane. This Xenopus laevis (African clawed frog) protein is Tetraspanin-9 (tspan9).